Here is a 505-residue protein sequence, read N- to C-terminus: MAQVINTNSLSLLTQNNLNKSQSSLSSAIERLSSGLRINSAKDDAAGQAIANRFTSNIKGLTQASRNANDGISIAQTTEGALNEINNNLQRVRELSVQATNGTNSDSDLKSIQDEIQQRLEEIDRVSNQTQFNGVKVLSQDNQMKIQVGANDGETITIDLQKIDVKSLGLDGFNVNGPKEATVGDLKSSFKNVTGYDTYAAGADKYRVDINSGAVVTDDAAPDKVYVNAANGQLTTDDAENNTAVNLFKTTKSTAGTDEAKAIASAIKGGKEGDTFDYKGVSFTIDTKAGNDGNGTVSTTINGEKVTLTVADITAGAANVNDATLQSSKNVYTSVVNGQFTFDDKTKNESAKLSDLEANNAVKGESKITVNGAEYTANAAGDKVTLAGKTMFIDKTASGVSTLINEDAAAAKKSTANPLASIDSALSKVDAVRSSLGAIQNRFDSAITNLGNTVTNLNSARSRIEDADYATEVSNMSKAQILQQAGTSVLAQANQVPQNVLSLLR.

This sequence belongs to the bacterial flagellin family.

It is found in the secreted. Its subcellular location is the bacterial flagellum. Its function is as follows. Flagellin is the subunit protein which polymerizes to form the filaments of bacterial flagella. This chain is Flagellin (fliC), found in Salmonella senftenberg.